The following is a 327-amino-acid chain: Aspartate--ammonia ligase (327 aa).

The protein belongs to the class-II aminoacyl-tRNA synthetase family. AsnA subfamily.

Its subcellular location is the cytoplasm. It carries out the reaction L-aspartate + NH4(+) + ATP = L-asparagine + AMP + diphosphate + H(+). Its pathway is amino-acid biosynthesis; L-asparagine biosynthesis; L-asparagine from L-aspartate (ammonia route): step 1/1. The polypeptide is Aspartate--ammonia ligase (Bacillus mycoides (strain KBAB4) (Bacillus weihenstephanensis)).